The chain runs to 95 residues: Small ribosomal subunit protein uS15 (95 aa).

Belongs to the universal ribosomal protein uS15 family. As to quaternary structure, part of the 30S ribosomal subunit. Forms a bridge to the 50S subunit in the 70S ribosome, contacting the 23S rRNA.

Its function is as follows. One of the primary rRNA binding proteins, it binds directly to 16S rRNA where it helps nucleate assembly of the platform of the 30S subunit by binding and bridging several RNA helices of the 16S rRNA. In terms of biological role, forms an intersubunit bridge (bridge B4) with the 23S rRNA of the 50S subunit in the ribosome. The chain is Small ribosomal subunit protein uS15 from Sulfurihydrogenibium sp. (strain YO3AOP1).